The primary structure comprises 94 residues: Co-chaperonin GroES (94 aa).

It belongs to the GroES chaperonin family. Heptamer of 7 subunits arranged in a ring. Interacts with the chaperonin GroEL.

It is found in the cytoplasm. Together with the chaperonin GroEL, plays an essential role in assisting protein folding. The GroEL-GroES system forms a nano-cage that allows encapsulation of the non-native substrate proteins and provides a physical environment optimized to promote and accelerate protein folding. GroES binds to the apical surface of the GroEL ring, thereby capping the opening of the GroEL channel. The protein is Co-chaperonin GroES of Streptococcus pneumoniae (strain ATCC 700669 / Spain 23F-1).